Here is an 843-residue protein sequence, read N- to C-terminus: Protein kintoun (843 aa).

Disordered regions lie at residues 212 to 242, 371 to 417, 545 to 672, and 761 to 843; these read PTAE…VHPM, FSRE…PVHS, YTVK…GASQ, and KKNQ…DDVM. Serine 376 is modified (phosphoserine). The span at 387–397 shows a compositional bias: acidic residues; the sequence is PVEEEEADADL. Positions 564–573 are enriched in basic and acidic residues; the sequence is VKFDHNKESL. The segment covering 584–593 has biased composition (acidic residues); sequence TEEDEVEEQH. The segment covering 605 to 619 has biased composition (basic residues); that stretch reads QNKKPSKKQRKRNKK. A compositionally biased stretch (polar residues) spans 658–671; sequence YSECNDSSVGSGAS. The segment covering 761–775 has biased composition (basic residues); sequence KKNQKRRDLKLRAQQ. Position 779 is a phosphoserine (serine 779).

It belongs to the PIH1 family. Kintoun subfamily. Interacts with Pp1alpha-96A, Pp1-87B, Pp1-13C and flw.

Its subcellular location is the cytoplasm. Its function is as follows. Required for cytoplasmic pre-assembly of axonemal dyneins, thereby playing a central role in motility in cilia and flagella. Involved in pre-assembly of dynein arm complexes in the cytoplasm before intraflagellar transport loads them for the ciliary compartment. The chain is Protein kintoun from Drosophila ananassae (Fruit fly).